A 188-amino-acid chain; its full sequence is Mitochondrial import receptor subunit TOM20 homolog (188 aa).

Topologically, residues 1 to 12 are mitochondrial intermembrane; it reads MSDTILGFNKSN. The chain crosses the membrane as a helical span at residues 13-31; sequence VVLAAGIAGAAFLGYCIYF. Over 32–188 the chain is Cytoplasmic; the sequence is DHKRINAPDY…ELIDDTDDLE (157 aa). Disordered stretches follow at residues 42–73 and 156–188; these read KDKI…AAPD and DEAE…DDLE. The span at 58-67 shows a compositional bias: low complexity; sequence MAPRRPAAAG.

The protein belongs to the Tom20 family. As to quaternary structure, forms part of the preprotein translocase complex of the outer mitochondrial membrane (TOM complex).

The protein localises to the mitochondrion outer membrane. Functionally, central component of the receptor complex responsible for the recognition and translocation of cytosolically synthesized mitochondrial preproteins. Together with tomm-22 functions as the transit peptide receptor at the surface of the mitochondrion outer membrane and facilitates the movement of preproteins into the translocation pore. The polypeptide is Mitochondrial import receptor subunit TOM20 homolog (Caenorhabditis elegans).